The following is a 159-amino-acid chain: Phosphopantetheine adenylyltransferase (159 aa).

Ser8 serves as a coordination point for substrate. Residues 8–9 (SF) and His16 each bind ATP. Positions 40, 72, and 86 each coordinate substrate. ATP is bound by residues 87-89 (GLR), Glu97, and 122-128 (HSFVSSS).

It belongs to the bacterial CoaD family. Homohexamer. Mg(2+) is required as a cofactor.

The protein resides in the cytoplasm. It catalyses the reaction (R)-4'-phosphopantetheine + ATP + H(+) = 3'-dephospho-CoA + diphosphate. It participates in cofactor biosynthesis; coenzyme A biosynthesis; CoA from (R)-pantothenate: step 4/5. Functionally, reversibly transfers an adenylyl group from ATP to 4'-phosphopantetheine, yielding dephospho-CoA (dPCoA) and pyrophosphate. The sequence is that of Phosphopantetheine adenylyltransferase from Synechococcus sp. (strain JA-3-3Ab) (Cyanobacteria bacterium Yellowstone A-Prime).